We begin with the raw amino-acid sequence, 293 residues long: 4-hydroxy-tetrahydrodipicolinate synthase (293 aa).

Thr45 lines the pyruvate pocket. Catalysis depends on Tyr133, which acts as the Proton donor/acceptor. Catalysis depends on Lys162, which acts as the Schiff-base intermediate with substrate. Ile204 serves as a coordination point for pyruvate.

The protein belongs to the DapA family. Homotetramer; dimer of dimers.

The protein resides in the cytoplasm. It carries out the reaction L-aspartate 4-semialdehyde + pyruvate = (2S,4S)-4-hydroxy-2,3,4,5-tetrahydrodipicolinate + H2O + H(+). It participates in amino-acid biosynthesis; L-lysine biosynthesis via DAP pathway; (S)-tetrahydrodipicolinate from L-aspartate: step 3/4. In terms of biological role, catalyzes the condensation of (S)-aspartate-beta-semialdehyde [(S)-ASA] and pyruvate to 4-hydroxy-tetrahydrodipicolinate (HTPA). The chain is 4-hydroxy-tetrahydrodipicolinate synthase from Brucella abortus biovar 1 (strain 9-941).